The sequence spans 66 residues: Large ribosomal subunit protein bL33c (66 aa).

The protein belongs to the bacterial ribosomal protein bL33 family.

It localises to the plastid. Its subcellular location is the chloroplast. The sequence is that of Large ribosomal subunit protein bL33c from Daucus carota (Wild carrot).